The following is a 526-amino-acid chain: Peptide chain release factor 3 (526 aa).

The region spanning 8–277 is the tr-type G domain; it reads NKRRTFAIIS…GLTQWAPAPQ (270 aa). GTP is bound by residues 17 to 24, 85 to 89, and 139 to 142; these read SHPDAGKT, DTPGH, and NKLD.

It belongs to the TRAFAC class translation factor GTPase superfamily. Classic translation factor GTPase family. PrfC subfamily.

Its subcellular location is the cytoplasm. In terms of biological role, increases the formation of ribosomal termination complexes and stimulates activities of RF-1 and RF-2. It binds guanine nucleotides and has strong preference for UGA stop codons. It may interact directly with the ribosome. The stimulation of RF-1 and RF-2 is significantly reduced by GTP and GDP, but not by GMP. This is Peptide chain release factor 3 from Histophilus somni (strain 2336) (Haemophilus somnus).